A 393-amino-acid polypeptide reads, in one-letter code: Sedoheptulose-1,7-bisphosphatase, chloroplastic (393 aa).

A disulfide bridge links Cys-115 with Cys-120. Residues Asp-126, Glu-155, Asp-176, Leu-178, and Asp-179 each contribute to the Mg(2+) site. Residues 179-182, Tyr-290, and Lys-320 contribute to the substrate site; that span reads DGSS. Glu-326 serves as a coordination point for Mg(2+).

This sequence belongs to the FBPase class 1 family. As to quaternary structure, homodimer. Requires Mg(2+) as cofactor.

The protein resides in the plastid. The protein localises to the chloroplast. It catalyses the reaction D-sedoheptulose 1,7-bisphosphate + H2O = D-sedoheptulose 7-phosphate + phosphate. It participates in carbohydrate biosynthesis; Calvin cycle. This chain is Sedoheptulose-1,7-bisphosphatase, chloroplastic, found in Triticum aestivum (Wheat).